The sequence spans 549 residues: CTP synthase (549 aa).

Positions 1-272 are amidoligase domain; that stretch reads MPPKSTTTKH…DAYVVRKLDL (272 aa). Residue S19 participates in CTP binding. S19 is a binding site for UTP. Residues 20–25 and D77 each bind ATP; that span reads SLGKGL. D77 and E146 together coordinate Mg(2+). CTP contacts are provided by residues 153–155, 193–198, and K229; these read DIE and KTKPTQ. Residues 193 to 198 and K229 each bind UTP; that span reads KTKPTQ. The region spanning 297–548 is the Glutamine amidotransferase type-1 domain; the sequence is NLALVGKYID…VKAAVERKTG (252 aa). G360 provides a ligand contact to L-glutamine. C387 serves as the catalytic Nucleophile; for glutamine hydrolysis. Residues 388–391, E411, and R473 each bind L-glutamine; that span reads LGLQ. Catalysis depends on residues H521 and E523.

The protein belongs to the CTP synthase family. As to quaternary structure, homotetramer.

It carries out the reaction UTP + L-glutamine + ATP + H2O = CTP + L-glutamate + ADP + phosphate + 2 H(+). The enzyme catalyses L-glutamine + H2O = L-glutamate + NH4(+). The catalysed reaction is UTP + NH4(+) + ATP = CTP + ADP + phosphate + 2 H(+). It functions in the pathway pyrimidine metabolism; CTP biosynthesis via de novo pathway; CTP from UDP: step 2/2. With respect to regulation, allosterically activated by GTP, when glutamine is the substrate; GTP has no effect on the reaction when ammonia is the substrate. The allosteric effector GTP functions by stabilizing the protein conformation that binds the tetrahedral intermediate(s) formed during glutamine hydrolysis. Inhibited by the product CTP, via allosteric rather than competitive inhibition. In terms of biological role, catalyzes the ATP-dependent amination of UTP to CTP with either L-glutamine or ammonia as the source of nitrogen. Regulates intracellular CTP levels through interactions with the four ribonucleotide triphosphates. This chain is CTP synthase, found in Streptomyces avermitilis (strain ATCC 31267 / DSM 46492 / JCM 5070 / NBRC 14893 / NCIMB 12804 / NRRL 8165 / MA-4680).